Here is a 496-residue protein sequence, read N- to C-terminus: Lysosomal Pro-X carboxypeptidase (496 aa).

Positions 1 to 21 (MGRRALLLLLLSFLAPWATIA) are cleaved as a signal peptide. The propeptide occupies 22–45 (LRPALRALGSLHLPTNPTSLPAVA). N-linked (GlcNAc...) asparagine glycosylation is found at Asn47 and Asn101. Catalysis depends on Ser179, which acts as the Charge relay system. An SKS domain region spans residues 194-334 (HMVVGALAAS…QNIFQALNVY (141 aa)). 4 cysteine pairs are disulfide-bonded: Cys215/Cys372, Cys233/Cys310, Cys264/Cys343, and Cys364/Cys394. Asn317, Asn336, and Asn345 each carry an N-linked (GlcNAc...) asparagine glycan. N-linked (GlcNAc...) asparagine glycosylation occurs at Asn415. Residues Asp430 and His455 each act as charge relay system in the active site.

This sequence belongs to the peptidase S28 family. Homodimer. As to expression, highest levels in placenta, lung and liver. Also present in heart, brain, pancreas and kidney.

The protein resides in the lysosome. It carries out the reaction Cleavage of a -Pro-|-Xaa bond to release a C-terminal amino acid.. Its function is as follows. Cleaves C-terminal amino acids linked to proline in peptides such as angiotensin II, III and des-Arg9-bradykinin. This cleavage occurs at acidic pH, but enzymatic activity is retained with some substrates at neutral pH. This Homo sapiens (Human) protein is Lysosomal Pro-X carboxypeptidase (PRCP).